We begin with the raw amino-acid sequence, 1146 residues long: Killer toxin subunits alpha/beta (1146 aa).

Residues 1–17 (MNIFYIFLFLLSFVQGL) form the signal peptide. Residues 18–29 (EHTHRRGSLVKR) constitute a propeptide that is removed on maturation. 2 consecutive LysM domains span residues 205 to 234 (ADQS…QPIC) and 254 to 303 (KTYK…NLCV). In terms of domain architecture, Chitin-binding type-1 spans 316-372 (IAECGPLAPGEKYNAKCPLNACCSEFGFCGLTKDYCDKKSSTTGAPGTDGCFSNCGY). 4 disulfides stabilise this stretch: C319–C338, C332–C344, C337–C351, and C366–C370. A GH18 domain is found at 383-735 (FKKIAYWLDA…DDTEDPFDEE (353 aa)). Chitin is bound by residues I424 and 447–450 (GGWD). Catalysis depends on E495, which acts as the Proton donor. Chitin is bound by residues Y496, 562 to 565 (MTYD), and W707. N-linked (GlcNAc...) asparagine glycans are attached at residues N771, N858, N868, N876, and N1117.

Belongs to the glycosyl hydrolase 18 family. The killer toxin is composed of three subunits: alpha, beta and gamma. RF2 is potentially split by membrane-bound basic amino acid-specific peptidase to yield the alpha and beta subunits.

The enzyme catalyses Random endo-hydrolysis of N-acetyl-beta-D-glucosaminide (1-&gt;4)-beta-linkages in chitin and chitodextrins.. The alpha subunit is a potent exochitinase. Along with the beta subunit it plays a role in the initial interaction of the toxin with sensitive cells and allow the gamma subunit (the active toxin) to gain entry into the cell. The protein is Killer toxin subunits alpha/beta of Kluyveromyces lactis (strain ATCC 8585 / CBS 2359 / DSM 70799 / NBRC 1267 / NRRL Y-1140 / WM37) (Yeast).